A 504-amino-acid polypeptide reads, in one-letter code: Maturase K (504 aa).

It belongs to the intron maturase 2 family. MatK subfamily.

It is found in the plastid. The protein resides in the chloroplast. Its function is as follows. Usually encoded in the trnK tRNA gene intron. Probably assists in splicing its own and other chloroplast group II introns. This is Maturase K from Quercus robur (English oak).